We begin with the raw amino-acid sequence, 215 residues long: Cytochrome b6 (215 aa).

The chain crosses the membrane as a helical span at residues 32–52; the sequence is IFYCLGGITLTCFLVQVATGF. Heme c is bound at residue Cys35. His86 and His100 together coordinate heme b. A run of 3 helical transmembrane segments spans residues 90–110, 116–136, and 186–206; these read ASMM…TGGF, LTWV…VTGY, and LHTF…FLMI. Heme b is bound by residues His187 and His202.

The protein belongs to the cytochrome b family. PetB subfamily. The 4 large subunits of the cytochrome b6-f complex are cytochrome b6, subunit IV (17 kDa polypeptide, PetD), cytochrome f and the Rieske protein, while the 4 small subunits are PetG, PetL, PetM and PetN. The complex functions as a dimer. Requires heme b as cofactor. It depends on heme c as a cofactor.

Its subcellular location is the plastid. The protein localises to the chloroplast thylakoid membrane. Component of the cytochrome b6-f complex, which mediates electron transfer between photosystem II (PSII) and photosystem I (PSI), cyclic electron flow around PSI, and state transitions. This Hordeum vulgare (Barley) protein is Cytochrome b6.